Reading from the N-terminus, the 482-residue chain is Glycogen synthase (482 aa).

Lysine 15 serves as a coordination point for ADP-alpha-D-glucose.

Belongs to the glycosyltransferase 1 family. Bacterial/plant glycogen synthase subfamily.

It catalyses the reaction [(1-&gt;4)-alpha-D-glucosyl](n) + ADP-alpha-D-glucose = [(1-&gt;4)-alpha-D-glucosyl](n+1) + ADP + H(+). It participates in glycan biosynthesis; glycogen biosynthesis. Functionally, synthesizes alpha-1,4-glucan chains using ADP-glucose. This chain is Glycogen synthase, found in Hydrogenobaculum sp. (strain Y04AAS1).